The following is a 383-amino-acid chain: MKNKLPPFIEIYRALIATPSISATEEALDQSNADLITLLADWFKDLGFNVEVQPVPGTRNKFNMLASIGQGAGGLLLAGHTDTVPFDDGRWTRDPFTLTEHDGKLYGLGTADMKGFFAFILDTLRDVDVTKLKKPLYILATADEETSMAGARYFAETTALRPDCAIIGEPTSLQPVRAHKGHISNAIRIQGQSGHSSDPARGVNAIELMHDAIGHILQLRDNLKERYHYEAFTVPYPTLNLGHIHGGDASNRICACCELHMDIRPLPSMTLNELNGLLNDALAPVSERWPGRLTVDELHPPIPGYECPPNHQLVEVVEKLLGAKTEVVNYCTEAPFIQTLCPTLVLGPGSINQAHQPDEYLETRFIKPTRELIIQVIHHFCWH.

Zn(2+) is bound at residue H80. D82 is a catalytic residue. Residue D112 coordinates Zn(2+). E144 is an active-site residue. Zn(2+) is bound by residues E145, E169, and H355.

It belongs to the peptidase M20A family. ArgE subfamily. Homodimer. It depends on Zn(2+) as a cofactor. The cofactor is Co(2+). Requires glutathione as cofactor.

It localises to the cytoplasm. It carries out the reaction N(2)-acetyl-L-ornithine + H2O = L-ornithine + acetate. Its pathway is amino-acid biosynthesis; L-arginine biosynthesis; L-ornithine from N(2)-acetyl-L-ornithine (linear): step 1/1. Its function is as follows. Catalyzes the hydrolysis of the amide bond of N(2)-acetylated L-amino acids. Cleaves the acetyl group from N-acetyl-L-ornithine to form L-ornithine, an intermediate in L-arginine biosynthesis pathway, and a branchpoint in the synthesis of polyamines. This is Acetylornithine deacetylase from Shigella sonnei (strain Ss046).